The chain runs to 653 residues: Leucine-rich repeat-containing protein 4 (653 aa).

The signal sequence occupies residues 1-38; it reads MKLLWQVTVHHHTWNAILLPFVYLTAQVWILCAAIAAA. The LRRNT domain occupies 39 to 75; the sequence is ASAGPQNCPSVCSCSNQFSKVVCTRRGLSEVPQGIPS. Over 39-527 the chain is Extracellular; it reads ASAGPQNCPS…SLDEVMKTTK (489 aa). Disulfide bonds link cysteine 46-cysteine 52 and cysteine 50-cysteine 61. LRR repeat units lie at residues 76–97, 100–121, 124–145, 148–169, 172–194, 197–218, 219–240, 243–264, and 267–288; these read NTRY…TFRH, HLEV…AFNG, SLNT…AFEY, KLRE…AFNR, SLMR…AFEG, NLKY…TPLV, GLEE…SFHG, SLKK…AFDG, and SLVE…LFTP. N-linked (GlcNAc...) asparagine glycosylation is found at asparagine 277, asparagine 322, asparagine 363, asparagine 388, asparagine 410, asparagine 434, asparagine 440, asparagine 447, and asparagine 450. One can recognise an LRRCT domain in the interval 300–352; it reads NPWNCDCDILWLAWWLREYIPTNSTCCGRCHAPMHMRGRYLVEVDQASFQCSA. Intrachain disulfides connect cysteine 304–cysteine 329 and cysteine 306–cysteine 350. In terms of domain architecture, Ig-like spans 353-442; sequence PFIMDAPRDL…SNASAYLNVS (90 aa). Cysteine 374 and cysteine 424 are disulfide-bonded. A helical transmembrane segment spans residues 528-548; the sequence is IIIGCFVAVTLLAAAMLIVFY. Residues 549–653 are Cytoplasmic-facing; the sequence is KLRKRHQQRS…TKDKVQETQI (105 aa).

Interacts with DLG4. Interacts (via LRR repeats) with NTNG2. Forms a complex with DLG4 and with NMDA receptors. Post-translationally, N-glycosylated. Specifically expressed in brain.

The protein localises to the membrane. The protein resides in the postsynaptic cell membrane. Synaptic adhesion protein. Regulates the formation of exitatory synapses through the recruitment of pre-and-postsynaptic proteins. Organize the lamina/pathway-specific differentiation of dendrites. Plays an important role for auditory synaptic responses. Involved in the suppression of glioma. This chain is Leucine-rich repeat-containing protein 4 (LRRC4), found in Homo sapiens (Human).